Consider the following 126-residue polypeptide: Fluoride-specific ion channel FluC (126 aa).

Transmembrane regions (helical) follow at residues 6 to 26, 36 to 56, 68 to 88, and 99 to 119; these read FVAV…FAVL, YGTL…VGFF, LLAV…SSEV, and IGML…MLGL. G76 and T79 together coordinate Na(+).

It belongs to the fluoride channel Fluc/FEX (TC 1.A.43) family.

Its subcellular location is the cell inner membrane. It catalyses the reaction fluoride(in) = fluoride(out). Na(+) is not transported, but it plays an essential structural role and its presence is essential for fluoride channel function. Its function is as follows. Fluoride-specific ion channel. Important for reducing fluoride concentration in the cell, thus reducing its toxicity. This is Fluoride-specific ion channel FluC from Ralstonia nicotianae (strain ATCC BAA-1114 / GMI1000) (Ralstonia solanacearum).